A 92-amino-acid chain; its full sequence is Small ribosomal subunit protein uS19 (92 aa).

This sequence belongs to the universal ribosomal protein uS19 family.

In terms of biological role, protein S19 forms a complex with S13 that binds strongly to the 16S ribosomal RNA. The polypeptide is Small ribosomal subunit protein uS19 (Rhizobium etli (strain CIAT 652)).